Reading from the N-terminus, the 418-residue chain is Putative FBD-associated F-box protein At5g56560 (418 aa).

The 57-residue stretch at 4 to 60 folds into the F-box domain; it reads QTRLSDLPDELLLKILSALPMFKVTLATRLISRRWKGPWKLVPDVTFDDDDIPFKSF. The FBD domain maps to 340–390; the sequence is LWEEPAVVAKCLSEHLEIFEWRQYEGTEQERNVAGYILANATCLKMATFST.

This Arabidopsis thaliana (Mouse-ear cress) protein is Putative FBD-associated F-box protein At5g56560.